We begin with the raw amino-acid sequence, 55 residues long: Large ribosomal subunit protein bL33 (55 aa).

It belongs to the bacterial ribosomal protein bL33 family.

The chain is Large ribosomal subunit protein bL33 from Bartonella quintana (strain Toulouse) (Rochalimaea quintana).